The sequence spans 181 residues: c-Myc-binding protein homolog (181 aa).

A compositionally biased stretch (low complexity) spans 111–127 (ESTEAAEQQQQQQQQEN). Disordered regions lie at residues 111–145 (ESTEAAEQQQQQQQQENGETELEKPNESSADVAEI) and 159–181 (VVTTDEAAQPSPTVQAEASGSSE). Positions 168 to 181 (PSPTVQAEASGSSE) are enriched in polar residues.

Belongs to the AMY1 family.

It is found in the nucleus. In Drosophila melanogaster (Fruit fly), this protein is c-Myc-binding protein homolog.